The chain runs to 219 residues: ATP-dependent Clp protease proteolytic subunit (219 aa).

The active-site Nucleophile is Ser101. His126 is a catalytic residue.

The protein belongs to the peptidase S14 family. In terms of assembly, component of the chloroplastic Clp protease core complex.

It localises to the plastid. It is found in the chloroplast stroma. It catalyses the reaction Hydrolysis of proteins to small peptides in the presence of ATP and magnesium. alpha-casein is the usual test substrate. In the absence of ATP, only oligopeptides shorter than five residues are hydrolyzed (such as succinyl-Leu-Tyr-|-NHMec, and Leu-Tyr-Leu-|-Tyr-Trp, in which cleavage of the -Tyr-|-Leu- and -Tyr-|-Trp bonds also occurs).. Cleaves peptides in various proteins in a process that requires ATP hydrolysis. Has a chymotrypsin-like activity. Plays a major role in the degradation of misfolded proteins. The sequence is that of ATP-dependent Clp protease proteolytic subunit from Chara vulgaris (Common stonewort).